A 257-amino-acid chain; its full sequence is Small ribosomal subunit protein uS4c (257 aa).

S4 RNA-binding domains are found at residues 110–170 (MRLD…QLVN) and 189–255 (KTLP…KNYL).

This sequence belongs to the universal ribosomal protein uS4 family. Part of the 30S ribosomal subunit. Contacts protein S5. The interaction surface between S4 and S5 is involved in control of translational fidelity.

It localises to the plastid. Its subcellular location is the chloroplast. One of the primary rRNA binding proteins, it binds directly to 16S rRNA where it nucleates assembly of the body of the 30S subunit. In terms of biological role, with S5 and S12 plays an important role in translational accuracy. The polypeptide is Small ribosomal subunit protein uS4c (rps4) (Chlamydomonas reinhardtii (Chlamydomonas smithii)).